We begin with the raw amino-acid sequence, 679 residues long: tRNA uridine 5-carboxymethylaminomethyl modification enzyme MnmG (679 aa).

FAD is bound at residue 15–20 (GAGHAG). NAD(+) is bound at residue 314–328 (GPRYCPSIEDKIVRF).

It belongs to the MnmG family. As to quaternary structure, homodimer. Heterotetramer of two MnmE and two MnmG subunits. Requires FAD as cofactor.

It is found in the cytoplasm. In terms of biological role, NAD-binding protein involved in the addition of a carboxymethylaminomethyl (cmnm) group at the wobble position (U34) of certain tRNAs, forming tRNA-cmnm(5)s(2)U34. This is tRNA uridine 5-carboxymethylaminomethyl modification enzyme MnmG from Roseiflexus sp. (strain RS-1).